Consider the following 260-residue polypeptide: uncharacterized protein (260 aa).

An HTH iclR-type domain is found at 7-67 (VPALTRAIDI…DHQENFCLWT (61 aa)). Residues 28-47 (AATIIDTLGIPKSTAYLLLN) constitute a DNA-binding region (H-T-H motif). The region spanning 82–251 (LRELARPRLT…ARDISRLLGW (170 aa)) is the IclR-ED domain.

This is an uncharacterized protein from Escherichia coli (strain K12).